The following is a 161-amino-acid chain: Transcriptional regulator MraZ (161 aa).

SpoVT-AbrB domains lie at 7–69 (KELH…EPDV) and 98–141 (LDVV…EPER).

Belongs to the MraZ family. Forms oligomers.

The protein localises to the cytoplasm. It is found in the nucleoid. The chain is Transcriptional regulator MraZ from Chlorobium limicola (strain DSM 245 / NBRC 103803 / 6330).